The chain runs to 469 residues: Flap endonuclease 1-B (469 aa).

The tract at residues 1–103 is N-domain; it reads MGIKGLTGLL…GVLSKRLERR (103 aa). Asp32 contacts Mg(2+). DNA is bound by residues Arg45 and Arg69. Mg(2+)-binding residues include Asp85, Glu157, Glu159, Asp183, and Asp185. The segment at 121–257 is I-domain; the sequence is DVDRFSRRTV…KSALKLIREY (137 aa). Residue Glu157 coordinates DNA. Residues Gly235 and Asp237 each contribute to the DNA site. Residue Asp237 participates in Mg(2+) binding. The tract at residues 274 to 354 is disordered; the sequence is QKAAQAAVES…GGMQIPEEWP (81 aa). 2 stretches are compositionally biased toward acidic residues: residues 282–295 and 302–317; these read ESDE…EDEP and EMPD…EEEA. Residues 326 to 342 show a composition bias toward basic residues; the sequence is PKKKKASSKTKEKRKGK. The segment at 412-420 is interaction with PCNA; that stretch reads QQGRLDGFF. A disordered region spans residues 424–469; sequence PKEKAAAPAPVGKAKGKGKIDAKAKGTKRKVDEKAESSAGKKPRKK. Over residues 441–459 the composition is skewed to basic and acidic residues; sequence GKIDAKAKGTKRKVDEKAE.

Belongs to the XPG/RAD2 endonuclease family. FEN1 subfamily. Interacts with PCNA. Three molecules of FEN1 bind to one PCNA trimer with each molecule binding to one PCNA monomer. PCNA stimulates the nuclease activity without altering cleavage specificity. Requires Mg(2+) as cofactor. In terms of processing, phosphorylated. Phosphorylation upon DNA damage induces relocalization to the nuclear plasma.

It is found in the nucleus. It localises to the nucleolus. Its subcellular location is the nucleoplasm. The protein resides in the mitochondrion. Structure-specific nuclease with 5'-flap endonuclease and 5'-3' exonuclease activities involved in DNA replication and repair. During DNA replication, cleaves the 5'-overhanging flap structure that is generated by displacement synthesis when DNA polymerase encounters the 5'-end of a downstream Okazaki fragment. It enters the flap from the 5'-end and then tracks to cleave the flap base, leaving a nick for ligation. Also involved in the long patch base excision repair (LP-BER) pathway, by cleaving within the apurinic/apyrimidinic (AP) site-terminated flap. Acts as a genome stabilization factor that prevents flaps from equilibrating into structures that lead to duplications and deletions. Also possesses 5'-3' exonuclease activity on nicked or gapped double-stranded DNA, and exhibits RNase H activity. Also involved in replication and repair of rDNA and in repairing mitochondrial DNA. In Laccaria bicolor (strain S238N-H82 / ATCC MYA-4686) (Bicoloured deceiver), this protein is Flap endonuclease 1-B.